Reading from the N-terminus, the 415-residue chain is Meiotic driver wtf36 (415 aa).

Disordered regions lie at residues 1–49 (MKNK…DLNN) and 67–99 (TTPP…SGTA). The span at 11–29 (SMDEMSAKNDNEIDLEKGP) shows a compositional bias: basic and acidic residues. A run of 7 helical transmembrane segments spans residues 105–125 (FLIK…PAVC), 142–162 (WTLF…LTYF), 169–189 (AVKV…IFLA), 205–225 (VTAI…AQCV), 240–260 (VVII…RSKF), 274–294 (CSIS…FWTL), and 298–318 (FSGL…TKGL).

It belongs to the WTF family. As to quaternary structure, homomer. Forms protein aggregates. The two isoforms can interact with each other and with themselves. High sequence similarity is required for their interaction.

The protein resides in the spore membrane. It localises to the vacuole membrane. It is found in the ascus epiplasm. Its subcellular location is the cytoplasm. The protein localises to the endoplasmic reticulum membrane. In terms of biological role, promotes unequal transmission of alleles from the parental zygote to progeny spores by acting as poison/antidote system where the poison and antidote proteins are produced from the same locus; the poison component is trans-acting and targets all spores within an ascus whereas the antidote component is spore-specific, leading to poisoning of all progeny that do not inherit the allele. Its function is as follows. Localizes isoform 2 to the vacuole thereby facilitating its degradation. Functionally, forms toxic aggregates that disrupt spore maturation. The protein is Meiotic driver wtf36 of Schizosaccharomyces pombe (Fission yeast).